We begin with the raw amino-acid sequence, 312 residues long: DNA-directed RNA polymerase subunit alpha (312 aa).

Residues 1 to 229 (MLQYQIERID…ELFQPLATVT (229 aa)) are alpha N-terminal domain (alpha-NTD). An alpha C-terminal domain (alpha-CTD) region spans residues 240 to 312 (PSPEAQIPLE…ISIPQSRTSV (73 aa)).

It belongs to the RNA polymerase alpha chain family. In terms of assembly, in cyanobacteria the RNAP catalytic core is composed of 2 alpha, 1 beta, 1 beta', 1 gamma and 1 omega subunit. When a sigma factor is associated with the core the holoenzyme is formed, which can initiate transcription.

The enzyme catalyses RNA(n) + a ribonucleoside 5'-triphosphate = RNA(n+1) + diphosphate. Functionally, DNA-dependent RNA polymerase catalyzes the transcription of DNA into RNA using the four ribonucleoside triphosphates as substrates. The protein is DNA-directed RNA polymerase subunit alpha of Prochlorococcus marinus (strain MIT 9301).